A 521-amino-acid polypeptide reads, in one-letter code: Non-specific phospholipase C5 (521 aa).

Residues 478-487 (SKKARERGGD) are compositionally biased toward basic and acidic residues. Residues 478–521 (SKKARERGGDENDIVFCVDDDDDHNVVKPPPSQSEPSHATPWSN) are disordered. A compositionally biased stretch (polar residues) spans 511–521 (SEPSHATPWSN).

Belongs to the bacterial phospholipase C family. As to expression, specifically expressed in flowers.

The protein resides in the cytoplasm. It localises to the cytosol. The catalysed reaction is a 1,2-diacyl-sn-glycero-3-phosphocholine + H2O = phosphocholine + a 1,2-diacyl-sn-glycerol + H(+). Its function is as follows. Non-specific phospholipase C (PLC) which assumes minor PLC activity during inorganic phosphate starvation. Can hydrolyze both phosphatidylcholine (PC) and phosphatidylethanolamine (PE). Required for normal accumulation of digalactosyldiacylglycerol (DGDG) during phosphate limitation and may contribute to the conversion of phospholipids to diacylglycerol, the substrate for galactolipid synthesis. The sequence is that of Non-specific phospholipase C5 (NPC5) from Arabidopsis thaliana (Mouse-ear cress).